The following is a 200-amino-acid chain: MLRLIVATHNPNKAKEIKDFFKGYPVEVVSMKELGIEEDIEEYGNTIEENALIKARFLRDKVKEGIVISDDTGLFVEYLGGQPGVYSARFAGENATYEENNRKLLKLLEGVPYEKRKAYFKTIIAVIEGEKEVLLEGVLEGHILDHLQGENGFGYDPVFFVDGIGKTLAELSLEEKNKISHRGKALLKLKEYILKRLEEN.

Position 8–13 (8–13 (THNPNK)) interacts with substrate. Mg(2+) is bound by residues glutamate 41 and aspartate 71. Aspartate 71 functions as the Proton acceptor in the catalytic mechanism. Substrate contacts are provided by residues threonine 72, 153 to 156 (FGYD), lysine 176, and 181 to 182 (HR).

This sequence belongs to the HAM1 NTPase family. In terms of assembly, homodimer. Mg(2+) is required as a cofactor.

It carries out the reaction XTP + H2O = XMP + diphosphate + H(+). The enzyme catalyses dITP + H2O = dIMP + diphosphate + H(+). It catalyses the reaction ITP + H2O = IMP + diphosphate + H(+). Pyrophosphatase that catalyzes the hydrolysis of nucleoside triphosphates to their monophosphate derivatives, with a high preference for the non-canonical purine nucleotides XTP (xanthosine triphosphate), dITP (deoxyinosine triphosphate) and ITP. Seems to function as a house-cleaning enzyme that removes non-canonical purine nucleotides from the nucleotide pool, thus preventing their incorporation into DNA/RNA and avoiding chromosomal lesions. The chain is dITP/XTP pyrophosphatase from Caldanaerobacter subterraneus subsp. tengcongensis (strain DSM 15242 / JCM 11007 / NBRC 100824 / MB4) (Thermoanaerobacter tengcongensis).